The chain runs to 305 residues: Membrane glycoprotein UL142 (305 aa).

A signal peptide spans 1–19 (MRIEWACWLFGYFVSSVGS). At 20–270 (ERSLSYRYHL…QKTNNTTSPW (251 aa)) the chain is on the lumenal side. Residues 271–288 (VYAIPMGATATIGAGLYI) form a helical membrane-spanning segment. Over 289–305 (GKHFTPVKFVYEVWRGQ) the chain is Cytoplasmic.

As to quaternary structure, interacts with host MICA and ULBP3.

The protein resides in the host endoplasmic reticulum membrane. The protein localises to the host Golgi apparatus membrane. Participates in the inhibition of the host immune response. Prevents host NK cell-mediated lysis of the infected cell by preventing the KLRK1 ligand 3/ULBP3 trafficking to the cell surface. Also retains another KLRK1 ligand, MHC class I-related chain A/MICA, in the Golgi apparatus to avoid its surface expression. The polypeptide is Membrane glycoprotein UL142 (UL142) (Homo sapiens (Human)).